The primary structure comprises 437 residues: Nuclear distribution protein PAC1 (437 aa).

The stretch at 64–94 (LSVIRLQRKVMDLETRLEAAEREASSTHKAN) forms a coiled coil. WD repeat units follow at residues 114–153 (LHKQPVNAVSFHPFHSTLASACEDGNIRIWDYELGEIETT), 156–217 (AHTR…ANVK), 221–260 (GHDHTISAVKFTASGNHVISASRDKTVRVWSVQSGYCVRT), 263–301 (GHTDWVKSCAALNEEFIFSAGIDHVTRVSEFVSGDGKMT), 304–356 (GHEH…LLIL), 358–397 (GHDNWVRGVVLHPAGRYLVSVSDDKTMRCWDLEQGGRCIR), and 401–437 (AHGHFVTCVAWAPNDVNGRVRCLVATGGVDGQVKVWQ). Residues 165–186 (DFSQPDTGASRDKSHDKPRADV) form a disordered region. A compositionally biased stretch (basic and acidic residues) spans 173–186 (ASRDKSHDKPRADV).

The protein belongs to the WD repeat LIS1/nudF family. Self-associates. Interacts with NDL1 and dynein.

The protein localises to the cytoplasm. Its subcellular location is the cytoskeleton. It localises to the spindle pole. Functionally, positively regulates the activity of the minus-end directed microtubule motor protein dynein. Plays a central role in positioning the mitotic spindle at the bud neck during cell division. Targets cytoplasmic dynein to microtubule plus ends, thereby promoting dynein-mediated microtubule sliding along the bud cortex and consequently the movement of the mitotic spindle to the bud neck. The chain is Nuclear distribution protein PAC1 from Yarrowia lipolytica (strain CLIB 122 / E 150) (Yeast).